A 479-amino-acid chain; its full sequence is U2 small nuclear ribonucleoprotein auxiliary factor 35 kDa subunit-related protein 1 (479 aa).

The disordered stretch occupies residues 1 to 63; it reads MAALEKMTFP…EDTFIEEQQL (63 aa). Basic residues predominate over residues 20 to 37; it reads SHKKYRAALKKEKRKKRR. The segment covering 50 to 63 has biased composition (acidic residues); sequence QEEEEDTFIEEQQL. Lys-67 participates in a covalent cross-link: Glycyl lysine isopeptide (Lys-Gly) (interchain with G-Cter in SUMO2). The C3H1-type 1 zinc finger occupies 171–199; the sequence is EKDRANCPFYSKTGACRFGDRCSRKHNFP. In terms of domain architecture, RRM spans 203-309; the sequence is PTLLIKSMFT…RQLQCEFCPV (107 aa). The C3H1-type 2 zinc finger occupies 311-338; that stretch reads RWKMAICGLFEIQQCPRGKHCNFLHVFR. Position 354 is a phosphoserine (Ser-354). A disordered region spans residues 356-479; sequence DQTGSSFGKN…DRTVQSPQSK (124 aa). Basic and acidic residues-rich tracts occupy residues 365 to 379 and 388 to 403; these read NSER…DHYY and PSPD…SERK. A Phosphoserine modification is found at Ser-389. Composition is skewed to basic residues over residues 404 to 417 and 442 to 451; these read KSSH…KRTS and SQSRRSHRSR.

The protein localises to the nucleus. The sequence is that of U2 small nuclear ribonucleoprotein auxiliary factor 35 kDa subunit-related protein 1 from Homo sapiens (Human).